The chain runs to 794 residues: Mitochondrial intermediate peptidase (794 aa).

The N-terminal 39 residues, 1-39 (MRVTSSRLLQGGSLVSRVLKRRLNNASRTKKGWFSTRTL), are a transit peptide targeting the mitochondrion. Position 581 (His581) interacts with Zn(2+). Glu582 is a catalytic residue. Zn(2+)-binding residues include His585 and His588.

This sequence belongs to the peptidase M3 family. The cofactor is Zn(2+).

Its subcellular location is the mitochondrion matrix. It catalyses the reaction Release of an N-terminal octapeptide as second stage of processing of some proteins imported into the mitochondrion.. Cleaves proteins, imported into the mitochondrion, to their mature size. While most mitochondrial precursor proteins are processed to the mature form in one step by mitochondrial processing peptidase (MPP), the sequential cleavage by MIP of an octapeptide after initial processing by MPP is a required step for a subgroup of nuclear-encoded precursor proteins destined for the matrix or the inner membrane. In Debaryomyces hansenii (strain ATCC 36239 / CBS 767 / BCRC 21394 / JCM 1990 / NBRC 0083 / IGC 2968) (Yeast), this protein is Mitochondrial intermediate peptidase (OCT1).